The chain runs to 412 residues: MQQLIDSLQKRGILDNSSAGLESLTAPVSAYLGFDPTAPSLHIGHWIGICFLRRLSAYGITPIALVGGATGMIGDPSGKSVERSLLDQEQVLDNSKKIEVALANYLPDIRIVNNADWLGSLSMVDFLRDIGKYFRLGSMLAKDVVKQRVYSEEGISYTEFSYLLLQSYDFAHLFKHHGVVLQCGGSDQWGNITSGIDYIRRKGLGQAFGLTYPLLTDSKGKKIGKTESGTVWLDPELTSPYELFQYFLRLSDQEIPKIARMLTLLDDDEVLALDKRLENDPQAVKRYVAEVIVKDVHGAEGLAQALATTESFFANKGKNITESELAALVQSGVGINVARADVIGKRWLDVVVQLGFCSSKGEARRLIQQRGLYVNQEPLIDEQSVLDGTYLCFDRYILLSQGKKKKQVIDLN.

Tyr31 is a binding site for L-tyrosine. The 'HIGH' region signature appears at Pro36–His45. L-tyrosine contacts are provided by Tyr162 and Gln166. Residues Lys222 to Thr226 carry the 'KMSKS' region motif. Lys225 lines the ATP pocket. Residues Lys345 to Asn412 form the S4 RNA-binding domain.

The protein belongs to the class-I aminoacyl-tRNA synthetase family. TyrS type 1 subfamily. As to quaternary structure, homodimer.

Its subcellular location is the cytoplasm. The catalysed reaction is tRNA(Tyr) + L-tyrosine + ATP = L-tyrosyl-tRNA(Tyr) + AMP + diphosphate + H(+). Its function is as follows. Catalyzes the attachment of tyrosine to tRNA(Tyr) in a two-step reaction: tyrosine is first activated by ATP to form Tyr-AMP and then transferred to the acceptor end of tRNA(Tyr). This chain is Tyrosine--tRNA ligase, found in Chlamydia muridarum (strain MoPn / Nigg).